Consider the following 94-residue polypeptide: Large ribosomal subunit protein uL23 (94 aa).

Belongs to the universal ribosomal protein uL23 family. Part of the 50S ribosomal subunit. Contacts protein L29, and trigger factor when it is bound to the ribosome.

In terms of biological role, one of the early assembly proteins it binds 23S rRNA. One of the proteins that surrounds the polypeptide exit tunnel on the outside of the ribosome. Forms the main docking site for trigger factor binding to the ribosome. The protein is Large ribosomal subunit protein uL23 of Akkermansia muciniphila (strain ATCC BAA-835 / DSM 22959 / JCM 33894 / BCRC 81048 / CCUG 64013 / CIP 107961 / Muc).